Here is a 200-residue protein sequence, read N- to C-terminus: HTH-type transcriptional regulator BetI (200 aa).

The HTH tetR-type domain occupies 8-68; sequence DIRKPQLVQA…ETMREILRQL (61 aa). A DNA-binding region (H-T-H motif) is located at residues 31-50; the sequence is SIALISKEAGVSTGIINHYF.

Its pathway is amine and polyamine biosynthesis; betaine biosynthesis via choline pathway [regulation]. In terms of biological role, repressor involved in the biosynthesis of the osmoprotectant glycine betaine. It represses transcription of the choline transporter BetT and the genes of BetAB involved in the synthesis of glycine betaine. The chain is HTH-type transcriptional regulator BetI from Vibrio atlanticus (strain LGP32) (Vibrio splendidus (strain Mel32)).